Consider the following 438-residue polypeptide: Adenosylhomocysteinase (438 aa).

Residues T64, D139, and E164 each contribute to the substrate site. 165-167 (TTT) contacts NAD(+). The substrate site is built by K194 and D198. Residues N199, 228–233 (GYGDVG), E251, N286, 307–309 (IGH), and N352 contribute to the NAD(+) site.

The protein belongs to the adenosylhomocysteinase family. NAD(+) serves as cofactor.

Its subcellular location is the cytoplasm. The catalysed reaction is S-adenosyl-L-homocysteine + H2O = L-homocysteine + adenosine. It participates in amino-acid biosynthesis; L-homocysteine biosynthesis; L-homocysteine from S-adenosyl-L-homocysteine: step 1/1. May play a key role in the regulation of the intracellular concentration of adenosylhomocysteine. This chain is Adenosylhomocysteinase, found in Coxiella burnetii (strain CbuK_Q154) (Coxiella burnetii (strain Q154)).